The sequence spans 94 residues: Large ribosomal subunit protein eL37 (94 aa).

Residues C19, C22, C34, and C37 each coordinate Zn(2+). The C4-type zinc-finger motif lies at 19 to 37 (CRRCGKATYHKQKLRCAAC).

The protein belongs to the eukaryotic ribosomal protein eL37 family. Requires Zn(2+) as cofactor.

Its subcellular location is the cytoplasm. Its function is as follows. Binds to the 23S rRNA. The sequence is that of Large ribosomal subunit protein eL37 (RPL37) from Tetrahymena thermophila (strain SB210).